The following is a 398-amino-acid chain: Cell adhesion molecule 3 (398 aa).

A signal peptide spans 1–24 (MGAPAASLLLLLLLFACCWAPGGA). The 102-residue stretch at 25–126 (NLSQDDSQPW…VRTAKSLVTV (102 aa)) folds into the Ig-like V-type domain. Residues 25 to 330 (NLSQDDSQPW…PVPSSSSTYH (306 aa)) lie on the Extracellular side of the membrane. 3 disulfides stabilise this stretch: cysteine 50/cysteine 110, cysteine 152/cysteine 209, and cysteine 254/cysteine 299. 2 Ig-like C2-type domains span residues 130–228 (PQKP…QRIE) and 233–315 (PTAM…YTLN). Asparagine 290 carries an N-linked (GlcNAc...) asparagine glycan. A helical transmembrane segment spans residues 331–351 (AIIGGIVAFIVFLLLIMLIFL). The Cytoplasmic segment spans residues 352–398 (GHYLIRHKGTYLTHEAKGSDDAPDADTAIINAEGGQSGGDDKKEYFI). Residues 367-398 (AKGSDDAPDADTAIINAEGGQSGGDDKKEYFI) form a disordered region. Serine 388 bears the Phosphoserine mark.

It belongs to the nectin family. In terms of assembly, homodimer. Can form trans-heterodimers with NECTIN3. Interacts with EPB41L1, DLG3, PALS2 and CASK. Isoform 1 is expressed mainly in adult and fetal brain. Isoform 2 is highly expressed in adult brain and weakly expressed in placenta. In brain, Isoform 2 is highly expressed in cerebellum.

It is found in the cell membrane. It localises to the cell junction. In terms of biological role, involved in cell-cell adhesion. Has both calcium-independent homophilic cell-cell adhesion activity and calcium-independent heterophilic cell-cell adhesion activity with IGSF4, NECTIN1 and NECTIN3. Interaction with EPB41L1 may regulate structure or function of cell-cell junctions. The chain is Cell adhesion molecule 3 (CADM3) from Homo sapiens (Human).